Consider the following 423-residue polypeptide: Histidine--tRNA ligase (423 aa).

Belongs to the class-II aminoacyl-tRNA synthetase family. As to quaternary structure, homodimer.

It localises to the cytoplasm. It catalyses the reaction tRNA(His) + L-histidine + ATP = L-histidyl-tRNA(His) + AMP + diphosphate + H(+). The protein is Histidine--tRNA ligase of Shewanella loihica (strain ATCC BAA-1088 / PV-4).